The chain runs to 251 residues: Probable transcriptional regulatory protein BLD_0450 (251 aa).

The protein belongs to the TACO1 family.

Its subcellular location is the cytoplasm. This chain is Probable transcriptional regulatory protein BLD_0450, found in Bifidobacterium longum (strain DJO10A).